Reading from the N-terminus, the 122-residue chain is Large ribosomal subunit protein uL14 (122 aa).

Belongs to the universal ribosomal protein uL14 family. Part of the 50S ribosomal subunit. Forms a cluster with proteins L3 and L19. In the 70S ribosome, L14 and L19 interact and together make contacts with the 16S rRNA in bridges B5 and B8.

Binds to 23S rRNA. Forms part of two intersubunit bridges in the 70S ribosome. The sequence is that of Large ribosomal subunit protein uL14 from Rhodococcus jostii (strain RHA1).